The chain runs to 116 residues: Fluoride-specific ion channel FluC 2 (116 aa).

The next 2 membrane-spanning stretches (helical) occupy residues 3–23 (LLTA…RYAV) and 43–63 (LLFG…AVTV). Na(+) is bound by residues glycine 67 and threonine 70. A helical transmembrane segment spans residues 96 to 116 (VGTLAAALLAVFLGIALGAAL).

The protein belongs to the fluoride channel Fluc/FEX (TC 1.A.43) family.

The protein localises to the cell membrane. It catalyses the reaction fluoride(in) = fluoride(out). Its activity is regulated as follows. Na(+) is not transported, but it plays an essential structural role and its presence is essential for fluoride channel function. In terms of biological role, fluoride-specific ion channel. Important for reducing fluoride concentration in the cell, thus reducing its toxicity. This chain is Fluoride-specific ion channel FluC 2, found in Natronomonas pharaonis (strain ATCC 35678 / DSM 2160 / CIP 103997 / JCM 8858 / NBRC 14720 / NCIMB 2260 / Gabara) (Halobacterium pharaonis).